The following is a 574-amino-acid chain: WAP, Kazal, immunoglobulin, Kunitz and NTR domain-containing protein 2 (574 aa).

The first 32 residues, Met-1 to Ala-32, serve as a signal peptide directing secretion. The WAP domain maps to Arg-37–Arg-90. 17 disulfide bridges follow: Cys-44–Cys-77, Cys-60–Cys-81, Cys-64–Cys-76, Cys-70–Cys-86, Cys-132–Cys-162, Cys-136–Cys-155, Cys-144–Cys-173, Cys-229–Cys-285, Cys-326–Cys-376, Cys-335–Cys-359, Cys-351–Cys-372, Cys-384–Cys-434, Cys-393–Cys-417, Cys-409–Cys-430, Cys-443–Cys-513, Cys-446–Cys-515, and Cys-457–Cys-564. In terms of domain architecture, Kazal-like spans Trp-124–Tyr-175. The Ig-like C2-type domain occupies Pro-208–Ser-301. 2 BPTI/Kunitz inhibitor domains span residues Cys-326–Cys-376 and Cys-384–Cys-434. The 122-residue stretch at Cys-443–Cys-564 folds into the NTR domain. The N-linked (GlcNAc...) asparagine glycan is linked to Asn-517.

The protein belongs to the WFIKKN family. In terms of assembly, interacts with both mature and propeptide myostatin/MSTN.

Its subcellular location is the secreted. In terms of biological role, protease-inhibitor that contains multiple distinct protease inhibitor domains. Probably has serine protease- and metalloprotease-inhibitor activity. Inhibits the biological activity of mature myostatin, but not activin. In Bos taurus (Bovine), this protein is WAP, Kazal, immunoglobulin, Kunitz and NTR domain-containing protein 2 (WFIKKN2).